A 351-amino-acid polypeptide reads, in one-letter code: Prostaglandin reductase 2 (351 aa).

99–100 (FY) is a binding site for substrate. NADP(+) contacts are provided by residues 165–168 (GACG), K192, Y208, N231, 253–259 (CGQISQY), 287–289 (FMV), and N337. Residue 288 to 290 (MVL) participates in substrate binding.

Belongs to the NADP-dependent oxidoreductase L4BD family. As to quaternary structure, monomer.

The protein resides in the cytoplasm. The catalysed reaction is 13,14-dihydro-15-oxo-prostaglandin E2 + NAD(+) = 15-oxoprostaglandin E2 + NADH + H(+). The enzyme catalyses 13,14-dihydro-15-oxo-prostaglandin E2 + NADP(+) = 15-oxoprostaglandin E2 + NADPH + H(+). It catalyses the reaction 13,14-dihydro-15-oxo-PGF2alpha + NADP(+) = 15-oxoprostaglandin F2alpha + NADPH + H(+). It carries out the reaction 13,14-dihydro-15-oxo-prostaglandin E1 + NADP(+) = 15-oxoprostaglandin E1 + NADPH + H(+). The catalysed reaction is 13,14-dihydro-15-oxo-prostaglandin F1alpha + NADP(+) = 15-oxoprostaglandin F1alpha + NADPH + H(+). In terms of biological role, functions as 15-oxo-prostaglandin 13-reductase and acts on 15-keto-PGE1, 15-keto-PGE2, 15-keto-PGE1-alpha and 15-keto-PGE2-alpha with highest activity towards 15-keto-PGE2. Overexpression represses transcriptional activity of PPARG and inhibits adipocyte differentiation. This chain is Prostaglandin reductase 2, found in Rattus norvegicus (Rat).